A 335-amino-acid chain; its full sequence is MKNMEQIDFVVTWVNNKDVDWCKRKSEFEKEYNIFQDLNSEERYREWGFMKYWFRAVEKYAPWVNKIYFITEGHVPNWLDVNHPKLVHVKHEDYIEKQFLPTFNSNVIEMNLIHLKDLSEKFVLFNDDTFINDFVKQSDFFENNLPKDTGIFSPLIPRENSLTPIVLNNMEIINKYFSKKKILEQNFSKFFNIKYGKHLLKNICLLPWSDLLGFYNSHIPVSYCKSNFLEVYEKEYDIFNLTFKNKFRNKNEINHWLIRYWQLSSGNFIPRNINFGKNYAISNDPTDIINELKFSKYKIICINDGESIDSFDEVKDLMIDAFEKKFPEKSSFEKK.

It belongs to the stealth family.

The polypeptide is Capsular polysaccharide phosphotransferase WcwK (wcwK) (Streptococcus pneumoniae).